Consider the following 249-residue polypeptide: Probable proteasome subunit alpha type-2 (249 aa).

It belongs to the peptidase T1A family. As to quaternary structure, the 26S proteasome consists of a 20S proteasome core and two 19S regulatory subunits. The 20S proteasome core is composed of 28 subunits that are arranged in four stacked rings, resulting in a barrel-shaped structure. The two end rings are each formed by seven alpha subunits, and the two central rings are each formed by seven beta subunits. The catalytic chamber with the active sites is on the inside of the barrel.

It is found in the cytoplasm. The protein resides in the nucleus. Functionally, the proteasome is a multicatalytic proteinase complex which is characterized by its ability to cleave peptides with Arg, Phe, Tyr, Leu, and Glu adjacent to the leaving group at neutral or slightly basic pH. The proteasome has an ATP-dependent proteolytic activity. The polypeptide is Probable proteasome subunit alpha type-2 (pca-2) (Neurospora crassa (strain ATCC 24698 / 74-OR23-1A / CBS 708.71 / DSM 1257 / FGSC 987)).